The sequence spans 634 residues: Threonine--tRNA ligase (634 aa).

The TGS domain occupies Met1–Thr61. Residues Asp241–Pro532 form a catalytic region. 3 residues coordinate Zn(2+): Cys332, His383, and His509.

Belongs to the class-II aminoacyl-tRNA synthetase family. Homodimer. Zn(2+) is required as a cofactor.

The protein localises to the cytoplasm. It catalyses the reaction tRNA(Thr) + L-threonine + ATP = L-threonyl-tRNA(Thr) + AMP + diphosphate + H(+). Catalyzes the attachment of threonine to tRNA(Thr) in a two-step reaction: L-threonine is first activated by ATP to form Thr-AMP and then transferred to the acceptor end of tRNA(Thr). Also edits incorrectly charged L-seryl-tRNA(Thr). The protein is Threonine--tRNA ligase of Francisella tularensis subsp. tularensis (strain FSC 198).